We begin with the raw amino-acid sequence, 501 residues long: Cell division control protein 24 (501 aa).

Interacts with dna2, pcn1 and rfc1.

It is found in the nucleus. Its subcellular location is the cytoplasm. Has a role in the progression of DNA replication and in the maintenance of genomic integrity. Acts during S phase, after initiation, where it is essential for completion. The sequence is that of Cell division control protein 24 (cdc24) from Schizosaccharomyces pombe (strain 972 / ATCC 24843) (Fission yeast).